Here is a 108-residue protein sequence, read N- to C-terminus: Pumilarin (108 aa).

Positions 1-38 are excised as a propeptide; that stretch reads MTETKNEIKLHVLFGALAVGFLMLALFSFSLQMLPVAD. Residues 39–108 constitute a cross-link (cyclopeptide (Leu-Trp)); sequence LAKEFGIPGS…KKGRKAVIAW (70 aa).

Post-translationally, the cross-link permits a high resistance to proteolysis. Is more resistant to specific proteases than to unspecific proteases.

The protein resides in the secreted. Cyclopeptide antibiotic that inhibits both Gram-positive and Gram-negative bacteria. Shows potent to weak activities against M.flavus (MIC=3 ug/ml), B.cereus (MIC=12 ug/ml), B.pumilus (MIC=12 ug/ml), E.coli (MIC=12 ug/ml), and S.pneumoniae (MIC=47 ug/ml). May act by forming pores. The polypeptide is Pumilarin (Bacillus safensis).